We begin with the raw amino-acid sequence, 191 residues long: Protein GrpE (191 aa).

Positions 1–10 are enriched in basic and acidic residues; the sequence is MNHEEQKVEA. The interval 1–28 is disordered; it reads MNHEEQKVEAMEQVEAQPVEPTDVDSEV.

It belongs to the GrpE family. Homodimer.

It is found in the cytoplasm. In terms of biological role, participates actively in the response to hyperosmotic and heat shock by preventing the aggregation of stress-denatured proteins, in association with DnaK and GrpE. It is the nucleotide exchange factor for DnaK and may function as a thermosensor. Unfolded proteins bind initially to DnaJ; upon interaction with the DnaJ-bound protein, DnaK hydrolyzes its bound ATP, resulting in the formation of a stable complex. GrpE releases ADP from DnaK; ATP binding to DnaK triggers the release of the substrate protein, thus completing the reaction cycle. Several rounds of ATP-dependent interactions between DnaJ, DnaK and GrpE are required for fully efficient folding. This is Protein GrpE from Aeromonas hydrophila subsp. hydrophila (strain ATCC 7966 / DSM 30187 / BCRC 13018 / CCUG 14551 / JCM 1027 / KCTC 2358 / NCIMB 9240 / NCTC 8049).